The following is a 127-amino-acid chain: Glycine cleavage system H protein (127 aa).

In terms of domain architecture, Lipoyl-binding spans 24–106 (VVTVGVTFHA…YGAGWFFKLK (83 aa)). Lysine 65 carries the post-translational modification N6-lipoyllysine.

Belongs to the GcvH family. In terms of assembly, the glycine cleavage system is composed of four proteins: P, T, L and H. The cofactor is (R)-lipoate.

The glycine cleavage system catalyzes the degradation of glycine. The H protein shuttles the methylamine group of glycine from the P protein to the T protein. The sequence is that of Glycine cleavage system H protein from Laribacter hongkongensis (strain HLHK9).